The primary structure comprises 102 residues: Large ribosomal subunit protein bL21 (102 aa).

This sequence belongs to the bacterial ribosomal protein bL21 family. Part of the 50S ribosomal subunit. Contacts protein L20.

In terms of biological role, this protein binds to 23S rRNA in the presence of protein L20. This chain is Large ribosomal subunit protein bL21, found in Syntrophotalea carbinolica (strain DSM 2380 / NBRC 103641 / GraBd1) (Pelobacter carbinolicus).